The primary structure comprises 387 residues: Succinate--CoA ligase [ADP-forming] subunit beta (387 aa).

The region spanning 9-244 is the ATP-grasp domain; sequence KRLLAEEGVP…STQQDGREIT (236 aa). ATP-binding positions include Lys-46, 53–55, Glu-99, Ser-102, and Glu-107; that span reads GRG. Mg(2+) contacts are provided by Asn-199 and Asp-213. Substrate contacts are provided by residues Asn-264 and 321-323; that span reads GIT.

The protein belongs to the succinate/malate CoA ligase beta subunit family. As to quaternary structure, heterotetramer of two alpha and two beta subunits. Mg(2+) is required as a cofactor.

The catalysed reaction is succinate + ATP + CoA = succinyl-CoA + ADP + phosphate. The enzyme catalyses GTP + succinate + CoA = succinyl-CoA + GDP + phosphate. It participates in carbohydrate metabolism; tricarboxylic acid cycle; succinate from succinyl-CoA (ligase route): step 1/1. Functionally, succinyl-CoA synthetase functions in the citric acid cycle (TCA), coupling the hydrolysis of succinyl-CoA to the synthesis of either ATP or GTP and thus represents the only step of substrate-level phosphorylation in the TCA. The beta subunit provides nucleotide specificity of the enzyme and binds the substrate succinate, while the binding sites for coenzyme A and phosphate are found in the alpha subunit. The protein is Succinate--CoA ligase [ADP-forming] subunit beta of Acidithiobacillus ferrooxidans (strain ATCC 23270 / DSM 14882 / CIP 104768 / NCIMB 8455) (Ferrobacillus ferrooxidans (strain ATCC 23270)).